Reading from the N-terminus, the 71-residue chain is Ubiquinol-cytochrome c reductase complex assembly factor 6 (71 aa).

The Mitochondrial matrix segment spans residues 1-8; that stretch reads MPAGVPMS. Residues 9 to 25 form a helical; Signal-anchor for type II membrane protein membrane-spanning segment; sequence TYLKMFAASLLAMCAGA. Residues 26–71 are Mitochondrial intermembrane-facing; that stretch reads EVVHRYYRPDLTIPEIPPKRGELKTELLGLKERKHKPQVSQQEELK.

This sequence belongs to the UQCC6 family. As to quaternary structure, interacts with UQCRC1. Interacts with UQCRQ. Interacts with UQCC5. Forms a complex, named COMB/coordinator of mitochondrial CYTB biogenesis, composed of UQCC1, UQCC2, UQCC4, UQCC5 and UQCC6; stabilizes nascent cytochrome b/MT-CYB and promotes its membrane insertion. Forms a complex, named COMA, composed of UQCC1, UQCC2 and UQCC4; activates MT-CYB translation. Forms a complex, named COMC, composed of UQCC1, UQCC2; UQCC3 and UQCC4; mediates MT-CYB hemylation and association with the first nuclear-encoded complex III subunit UQCRQ. Interacts with MT-CYB. Cardiac and skeletal muscle (at protein level).

Its subcellular location is the mitochondrion inner membrane. Functionally, required for the assembly and stability of the mitochondrial ubiquinol-cytochrome c reductase complex (complex III (CIII) or cytochrome b-c1 complex), a multisubunit transmembrane complex that is part of the mitochondrial electron transport chain (ETC) which drives oxidative phosphorylation. Mediates early complex III biogenesis. Participates in regulating the levels of electron transport chain proteins, and therefore energy supply, in response to changes in energy demand. Also required for cytochrome c oxidase complex (complex IV) assembly. This Homo sapiens (Human) protein is Ubiquinol-cytochrome c reductase complex assembly factor 6.